The sequence spans 354 residues: Carbamoyl phosphate synthase small chain (354 aa).

Positions 1–167 are CPSase; it reads MEAVLILEDG…KEPKIHKTAN (167 aa). Positions 45, 219, and 221 each coordinate L-glutamine. The 184-residue stretch at 171 to 354 folds into the Glutamine amidotransferase type-1 domain; that stretch reads RCVLIDCGVK…DEMIKLKDRK (184 aa). Cysteine 246 functions as the Nucleophile in the catalytic mechanism. Residues leucine 247, glutamine 250, asparagine 288, glycine 290, and phenylalanine 291 each contribute to the L-glutamine site. Residues histidine 330 and glutamate 332 contribute to the active site.

It belongs to the CarA family. As to quaternary structure, composed of two chains; the small (or glutamine) chain promotes the hydrolysis of glutamine to ammonia, which is used by the large (or ammonia) chain to synthesize carbamoyl phosphate. Tetramer of heterodimers (alpha,beta)4.

It catalyses the reaction hydrogencarbonate + L-glutamine + 2 ATP + H2O = carbamoyl phosphate + L-glutamate + 2 ADP + phosphate + 2 H(+). The catalysed reaction is L-glutamine + H2O = L-glutamate + NH4(+). It participates in amino-acid biosynthesis; L-arginine biosynthesis; carbamoyl phosphate from bicarbonate: step 1/1. Its pathway is pyrimidine metabolism; UMP biosynthesis via de novo pathway; (S)-dihydroorotate from bicarbonate: step 1/3. Small subunit of the glutamine-dependent carbamoyl phosphate synthetase (CPSase). CPSase catalyzes the formation of carbamoyl phosphate from the ammonia moiety of glutamine, carbonate, and phosphate donated by ATP, constituting the first step of 2 biosynthetic pathways, one leading to arginine and/or urea and the other to pyrimidine nucleotides. The small subunit (glutamine amidotransferase) binds and cleaves glutamine to supply the large subunit with the substrate ammonia. The protein is Carbamoyl phosphate synthase small chain of Methanocaldococcus jannaschii (strain ATCC 43067 / DSM 2661 / JAL-1 / JCM 10045 / NBRC 100440) (Methanococcus jannaschii).